The sequence spans 256 residues: DNA repair protein RecO (256 aa).

Belongs to the RecO family.

Functionally, involved in DNA repair and RecF pathway recombination. The chain is DNA repair protein RecO from Bartonella henselae (strain ATCC 49882 / DSM 28221 / CCUG 30454 / Houston 1) (Rochalimaea henselae).